The primary structure comprises 277 residues: uncharacterized protein (277 aa).

It belongs to the BtpA family.

The protein resides in the mitochondrion. This is an uncharacterized protein from Caenorhabditis elegans.